The sequence spans 121 residues: UPF0738 protein BPUM_1088 (121 aa).

Belongs to the UPF0738 family.

The chain is UPF0738 protein BPUM_1088 from Bacillus pumilus (strain SAFR-032).